Reading from the N-terminus, the 334-residue chain is Phosphoribosylformylglycinamidine cyclo-ligase (334 aa).

The protein belongs to the AIR synthase family.

It is found in the cytoplasm. It catalyses the reaction 2-formamido-N(1)-(5-O-phospho-beta-D-ribosyl)acetamidine + ATP = 5-amino-1-(5-phospho-beta-D-ribosyl)imidazole + ADP + phosphate + H(+). The protein operates within purine metabolism; IMP biosynthesis via de novo pathway; 5-amino-1-(5-phospho-D-ribosyl)imidazole from N(2)-formyl-N(1)-(5-phospho-D-ribosyl)glycinamide: step 2/2. This Pyrococcus abyssi (strain GE5 / Orsay) protein is Phosphoribosylformylglycinamidine cyclo-ligase.